A 333-amino-acid chain; its full sequence is NADH-quinone oxidoreductase subunit H (333 aa).

8 consecutive transmembrane segments (helical) span residues 15–35 (IALFFGLGALLLAVVLAFVTY), 88–108 (YVLAPIIAFVPSFMVLAVLPF), 117–137 (IGVGLLYYIAVSGLTTVGVVA), 165–185 (LVMSALGVVLLAGSMNLVDIV), 191–211 (VWFIFAQPLAFLIFLIAAVAE), 241–261 (FFMLAEYVYLFAMAALVTILF), 274–294 (IPGAVWFALKFCAVVFVLIWF), and 313–333 (VLLPLSLVNIVLTAVVKAWFF).

Belongs to the complex I subunit 1 family. In terms of assembly, NDH-1 is composed of 14 different subunits. Subunits NuoA, H, J, K, L, M, N constitute the membrane sector of the complex.

It localises to the cell membrane. It carries out the reaction a quinone + NADH + 5 H(+)(in) = a quinol + NAD(+) + 4 H(+)(out). Functionally, NDH-1 shuttles electrons from NADH, via FMN and iron-sulfur (Fe-S) centers, to quinones in the respiratory chain. The immediate electron acceptor for the enzyme in this species is believed to be ubiquinone. Couples the redox reaction to proton translocation (for every two electrons transferred, four hydrogen ions are translocated across the cytoplasmic membrane), and thus conserves the redox energy in a proton gradient. This subunit may bind ubiquinone. This Geobacillus kaustophilus (strain HTA426) protein is NADH-quinone oxidoreductase subunit H.